Reading from the N-terminus, the 116-residue chain is Ribosome-binding factor A (116 aa).

Belongs to the RbfA family. In terms of assembly, monomer. Binds 30S ribosomal subunits, but not 50S ribosomal subunits or 70S ribosomes.

Its subcellular location is the cytoplasm. Functionally, one of several proteins that assist in the late maturation steps of the functional core of the 30S ribosomal subunit. Associates with free 30S ribosomal subunits (but not with 30S subunits that are part of 70S ribosomes or polysomes). Required for efficient processing of 16S rRNA. May interact with the 5'-terminal helix region of 16S rRNA. The protein is Ribosome-binding factor A of Streptococcus mutans serotype c (strain ATCC 700610 / UA159).